The chain runs to 644 residues: Transcription factor cep-1 (644 aa).

The DNA-binding element occupies 223–418; the sequence is EKWMEIDVLK…NFCEREDAKQ (196 aa). 4 residues coordinate Zn(2+): Cys307, His310, Cys361, and Cys365. Residues 528 to 555 are required for tertiary structure stability of the protein; sequence TNYSFRTLTLSTAEYTKVVEFLAREAKV.

Belongs to the p53 family. Homodimer. Interacts (via C-terminus domain) with prmt-5; not methylated by prmt-5. Interacts with cbp-1 (via HAT domain); cep-1 transcriptional activity may be inhibited by interaction with methylated cbp-1. Component of a complex that contains prmt-5 and cbp-1. Interacts with ape-1; the interaction inhibits pro-apoptotic activity of cep-1. Zn(2+) serves as cofactor. Post-translationally, phosphorylated in response to IR-induced DNA damage which is thought to be mediated by akt-1. As to expression, expressed in pharyngeal muscle and neurons.

It localises to the nucleus. Its function is as follows. Transcriptional activator that binds the same DNA consensus sequence as p53. Has a role in normal development to ensure proper meiotic chromosome segregation. Promotes apoptosis under conditions of cellular and genotoxic stress in response to DNA damage, hypoxia, or starvation. Regulates germline apoptosis in response to DNA damage. Its pro-apoptotic activity is inhibited when bound to ape-1 in vitro. Plays a role in cell cycle arrest in the germline in response to DNA damage by UV-C light. However, not required for survival in response to DNA damage induced by UV-C light, indicating that it is unlikely to be involved in DNA repair. Required for induction of ced-13 in response to DNA damage. Regulates DNA damage-induced apoptosis by inducing transcription of the programmed cell death activator egl-1. Regulates germline proliferation by activating phg-1. Modulates lifespan. This chain is Transcription factor cep-1, found in Caenorhabditis elegans.